The primary structure comprises 273 residues: Putative methyltransferase Cher3 (273 aa).

Residues 1–273 enclose the CheR-type methyltransferase domain; it reads MTSERNTDIE…VKPQRIFRKS (273 aa). Residues S76, R80, E114, D137, 199 to 200, and 215 to 216 each bind S-adenosyl-L-methionine; these read SL and RN.

The sequence is that of Putative methyltransferase Cher3 (cheR3) from Pseudomonas putida (strain ATCC 47054 / DSM 6125 / CFBP 8728 / NCIMB 11950 / KT2440).